We begin with the raw amino-acid sequence, 331 residues long: Glyceraldehyde-3-phosphate dehydrogenase 3 (331 aa).

Residues 11–12 (RI), D33, and E77 each bind NAD(+). S148 carries the phosphoserine modification. D-glyceraldehyde 3-phosphate is bound at residue 148 to 150 (SCT). C149 (nucleophile) is an active-site residue. S177 carries the post-translational modification Phosphoserine. T179 contributes to the D-glyceraldehyde 3-phosphate binding site. At S200 the chain carries Phosphoserine. Residues 208 to 209 (TG) and R231 contribute to the D-glyceraldehyde 3-phosphate site. N313 is an NAD(+) binding site.

It belongs to the glyceraldehyde-3-phosphate dehydrogenase family. Homotetramer.

The protein localises to the cytoplasm. It catalyses the reaction D-glyceraldehyde 3-phosphate + phosphate + NAD(+) = (2R)-3-phospho-glyceroyl phosphate + NADH + H(+). Its pathway is carbohydrate degradation; glycolysis; pyruvate from D-glyceraldehyde 3-phosphate: step 1/5. This is Glyceraldehyde-3-phosphate dehydrogenase 3 from Kluyveromyces marxianus (Yeast).